Consider the following 474-residue polypeptide: Ribulose bisphosphate carboxylase/oxygenase activase, chloroplastic (474 aa).

Residues 1-58 constitute a chloroplast transit peptide; the sequence is MAAAVSTVGAINRAPLSLNGSGSGAVSAPASTFLGKKVVTVSRFAQSNKKSNGSFKVL. Thr78 is subject to Phosphothreonine; by CK2. 165 to 172 lines the ATP pocket; the sequence is GGKGQGKS. Position 283 is a phosphothreonine (Thr283).

It belongs to the RuBisCO activase family. Phosphorylated at Thr-78 by CK2.

The protein resides in the plastid. Its subcellular location is the chloroplast stroma. It localises to the chloroplast. The protein localises to the plastoglobule. Functionally, activation of RuBisCO (ribulose-1,5-bisphosphate carboxylase/oxygenase; EC 4.1.1.39) involves the ATP-dependent carboxylation of the epsilon-amino group of lysine leading to a carbamate structure. This Arabidopsis thaliana (Mouse-ear cress) protein is Ribulose bisphosphate carboxylase/oxygenase activase, chloroplastic (RCA).